The chain runs to 38 residues: Bacteriocin BAC79 (38 aa).

Its activity is regulated as follows. The antimicrobial activity of BAC79 was completely lost after treatment with enzymes trypsin, pepsin, proteinase-K, and carboxypeptidase, while there was no loss of activity with either amylase or lipase. Functionally, has antibacterial activity against a wide spectrum of Gram-positive and Gram-negative bacteria, including L.monocytogenes which is inhibited through disruption of the cell membrane. The chain is Bacteriocin BAC79 from Weissella confusa (Lactobacillus confusus).